Reading from the N-terminus, the 535-residue chain is Peptide chain release factor 3 (535 aa).

The region spanning 8–277 is the tr-type G domain; sequence KRRRTFAIIS…TLVELAPPPG (270 aa). GTP contacts are provided by residues 17–24, 85–89, and 139–142; these read SHPDAGKT, DTPGH, and NKLD.

The protein belongs to the TRAFAC class translation factor GTPase superfamily. Classic translation factor GTPase family. PrfC subfamily.

It is found in the cytoplasm. Functionally, increases the formation of ribosomal termination complexes and stimulates activities of RF-1 and RF-2. It binds guanine nucleotides and has strong preference for UGA stop codons. It may interact directly with the ribosome. The stimulation of RF-1 and RF-2 is significantly reduced by GTP and GDP, but not by GMP. The sequence is that of Peptide chain release factor 3 from Nitrosomonas europaea (strain ATCC 19718 / CIP 103999 / KCTC 2705 / NBRC 14298).